A 150-amino-acid polypeptide reads, in one-letter code: Lipoprotein signal peptidase (150 aa).

Transmembrane regions (helical) follow at residues 59–79 (VFVG…RYLP) and 84–101 (LLRL…GNLI). Residues aspartate 111 and aspartate 125 contribute to the active site. Residues 117-137 (IWPVFNLADMAIVFGVIILCW) traverse the membrane as a helical segment.

It belongs to the peptidase A8 family.

Its subcellular location is the cell membrane. The enzyme catalyses Release of signal peptides from bacterial membrane prolipoproteins. Hydrolyzes -Xaa-Yaa-Zaa-|-(S,diacylglyceryl)Cys-, in which Xaa is hydrophobic (preferably Leu), and Yaa (Ala or Ser) and Zaa (Gly or Ala) have small, neutral side chains.. It participates in protein modification; lipoprotein biosynthesis (signal peptide cleavage). This protein specifically catalyzes the removal of signal peptides from prolipoproteins. The chain is Lipoprotein signal peptidase from Moorella thermoacetica (strain ATCC 39073 / JCM 9320).